We begin with the raw amino-acid sequence, 152 residues long: Xanthine-guanine phosphoribosyltransferase (152 aa).

5-phospho-alpha-D-ribose 1-diphosphate is bound by residues 37–38 (RG), arginine 69, and 88–96 (DDLVDTGVT). Arginine 69 lines the GMP pocket. Residue aspartate 89 participates in Mg(2+) binding. Guanine is bound by residues aspartate 92 and isoleucine 135. Xanthine contacts are provided by aspartate 92 and isoleucine 135. GMP is bound by residues 92 to 96 (DTGVT) and 134 to 135 (WI).

Belongs to the purine/pyrimidine phosphoribosyltransferase family. XGPT subfamily. Homotetramer. The cofactor is Mg(2+).

It localises to the cell inner membrane. It carries out the reaction GMP + diphosphate = guanine + 5-phospho-alpha-D-ribose 1-diphosphate. It catalyses the reaction XMP + diphosphate = xanthine + 5-phospho-alpha-D-ribose 1-diphosphate. The enzyme catalyses IMP + diphosphate = hypoxanthine + 5-phospho-alpha-D-ribose 1-diphosphate. It participates in purine metabolism; GMP biosynthesis via salvage pathway; GMP from guanine: step 1/1. It functions in the pathway purine metabolism; XMP biosynthesis via salvage pathway; XMP from xanthine: step 1/1. Functionally, purine salvage pathway enzyme that catalyzes the transfer of the ribosyl-5-phosphate group from 5-phospho-alpha-D-ribose 1-diphosphate (PRPP) to the N9 position of the 6-oxopurines guanine and xanthine to form the corresponding ribonucleotides GMP (guanosine 5'-monophosphate) and XMP (xanthosine 5'-monophosphate), with the release of PPi. To a lesser extent, also acts on hypoxanthine. This chain is Xanthine-guanine phosphoribosyltransferase, found in Sodalis glossinidius (strain morsitans).